The primary structure comprises 352 residues: ADP-ribosylation factor GTPase-activating protein GCS1 (352 aa).

Residues 11–127 (RRRLLQLQKI…LTCLCEDRVF (117 aa)) enclose the Arf-GAP domain. The C4-type zinc-finger motif lies at 26 to 49 (CMDCGAPNPQWATPKFGAFICLEC). Residues 138 to 151 (SKLSATSQTAASAT) show a composition bias toward low complexity. Disordered regions lie at residues 138–181 (SKLS…ANFQ) and 196–231 (NQSR…GSSN). The residue at position 151 (threonine 151) is a Phosphothreonine. Position 157 is a phosphoserine (serine 157). Threonine 161 is subject to Phosphothreonine. The residue at position 168 (serine 168) is a Phosphoserine. The span at 168 to 179 (SATPANSSNGAN) shows a compositional bias: polar residues. Threonine 170 carries the phosphothreonine modification. Serine 260 carries the post-translational modification Phosphoserine. The span at 315–330 (NGNAEDSSTAGNTTHT) shows a compositional bias: polar residues. The interval 315–352 (NGNAEDSSTAGNTTHTEYQKIDNNDKKNEQDEDKWDDF) is disordered. Residues 331 to 343 (EYQKIDNNDKKNE) are compositionally biased toward basic and acidic residues.

The protein localises to the cytoplasm. It localises to the mitochondrion. Its subcellular location is the perinuclear region. The protein resides in the golgi apparatus. In terms of biological role, GTPase-activating protein (GAP) for ARF1 and ARF2. Involved in intracellular vesicular transport. Required for transport from the trans-Golgi network. Implicated in the regulation of retrograde transport from the Golgi to the ER and in actin cytoskeletal organization. May be involved in the maintenance of mitochondrial morphology, possibly through organizing the actin cytoskeleton in Saccharomyces. This Saccharomyces cerevisiae (strain ATCC 204508 / S288c) (Baker's yeast) protein is ADP-ribosylation factor GTPase-activating protein GCS1 (GCS1).